Consider the following 264-residue polypeptide: MSNSNIHPTAVIAEGANLGKNVKIGPYCIIGAEVVLNDNVELKSHVVIEGITEIGENTIIYPFASIGQPPQILKYANERSSTIIGSNNTIREYVTVQAGSQGGGMITRIGNNNLFMVGVHVGHDCKIGNNVVFANYVSLAGHIEVGDYVIISGLSAVHQYARIGKYSMIGGLSPVGSDVIPFGLVSSKRAVLEGLNLIGMNRKGFDKAESLSALKAIKEIFSSEGNFAERIKQVAEKYKNNSIVMQIIDFLNQDSSRAFCHFEK.

It belongs to the transferase hexapeptide repeat family. LpxA subfamily. Homotrimer.

Its subcellular location is the cytoplasm. The enzyme catalyses a (3R)-hydroxyacyl-[ACP] + UDP-N-acetyl-alpha-D-glucosamine = a UDP-3-O-[(3R)-3-hydroxyacyl]-N-acetyl-alpha-D-glucosamine + holo-[ACP]. It participates in glycolipid biosynthesis; lipid IV(A) biosynthesis; lipid IV(A) from (3R)-3-hydroxytetradecanoyl-[acyl-carrier-protein] and UDP-N-acetyl-alpha-D-glucosamine: step 1/6. Functionally, involved in the biosynthesis of lipid A, a phosphorylated glycolipid that anchors the lipopolysaccharide to the outer membrane of the cell. The polypeptide is Acyl-[acyl-carrier-protein]--UDP-N-acetylglucosamine O-acyltransferase (Rickettsia canadensis (strain McKiel)).